The chain runs to 687 residues: Adhesion G-protein coupled receptor G1 (687 aa).

The N-terminal stretch at 1–25 (MTAQSLLQTTLFLLSLLFLVQGAHG) is a signal peptide. A heparin-binding site is contributed by 26 to 33 (RGHREDFR). Over 26-402 (RGHREDFRFC…VEVDAVHKHY (377 aa)) the chain is Extracellular. Cystine bridges form between cysteine 35/cysteine 91 and cysteine 121/cysteine 177. Asparagine 39, asparagine 148, and asparagine 171 each carry an N-linked (GlcNAc...) asparagine glycan. 190-200 (LKHPQKASRRP) contacts heparin. The GAIN-B domain maps to 224–395 (DTVSFEEDRI…AVLMVSSVEV (172 aa)). 4 N-linked (GlcNAc...) asparagine glycosylation sites follow: asparagine 234, asparagine 303, asparagine 324, and asparagine 341. 2 disulfides stabilise this stretch: cysteine 346–cysteine 377 and cysteine 366–cysteine 379. The GPS stretch occupies residues 346 to 395 (CVFWVEDPTLSSPGHWSSAGCETVRRETQTSCLCNHLTYFAVLMVSSVEV). Residues 384-397 (YFAVLMVSSVEVDA) are stachel. Residues 403 to 423 (LSLLSYVGCVVSALACVVTIA) traverse the membrane as a helical segment. At 424-442 (AYLCSRRKPRDYTIKVHMN) the chain is on the cytoplasmic side. Residues 443 to 463 (LLLAVFLLDTSFLLSEPVALT) form a helical membrane-spanning segment. Topologically, residues 464–470 (GSEAGCR) are extracellular. The helical transmembrane segment at 471–491 (ASAIFLHFSLLACLSWMGLEG) threads the bilayer. Over 492 to 512 (YNLYRLVVEVFGTYVPGYLLK) the chain is Cytoplasmic. The helical transmembrane segment at 513–533 (LSAMGWGFPIFLVTLVALVDV) threads the bilayer. Topologically, residues 534–570 (DNYGPIILAVHRTPEGVIYPSMCWIRDSLVSYITNLG) are extracellular. The chain crosses the membrane as a helical span at residues 571–591 (LFSLVFLFNMAMLATMVVQIL). Residues 592-603 (RLRPHTQKWSHV) lie on the Cytoplasmic side of the membrane. A helical transmembrane segment spans residues 604-624 (LTLLGLSLVLGLPWALIFFSF). The Extracellular segment spans residues 625 to 630 (ASGTFQ). Residues 631-651 (LVILYLFSIITSFQGFLIFIW) form a helical membrane-spanning segment. Topologically, residues 652 to 687 (YWSMRLQARGGPSPLKSNSDSARLPISSGSTSSSRI) are cytoplasmic. The tract at residues 664–687 (SPLKSNSDSARLPISSGSTSSSRI) is disordered. Positions 678–687 (SSGSTSSSRI) are enriched in low complexity.

It belongs to the G-protein coupled receptor 2 family. LN-TM7 subfamily. In terms of assembly, heterodimer of 2 chains generated by proteolytic processing; the large extracellular N-terminal fragment (ADGRG1 NT) and the membrane-bound C-terminal fragment (ADGRG1-CT) predominantly remain associated and non-covalently linked. ADGRG1 NT self-associates in a trans-trans manner; the homophilic interaction enhances receptor signaling. Interacts with TGM2. Interacts with heparin; leading to the reduction of ADGRG1 shedding. Interacts with COL3A1. Part of a GPCR-tetraspanin complex at least consisting of ADGRG1, CD81, eventually CD9, and GNA11 in which CD81 is enhancing the association of ADGRG1 with GNA11. Autoproteolytically cleaved into 2 fragments; the large extracellular N-terminal fragment (ADGRG1 NT) and the membrane-bound C-terminal fragment (ADGRG1 CT) predominantly remain associated and non-covalently linked. Shedding to yield the secreted ADGRG1 N-terminal fragment seems to involve metalloprotease(s). In terms of processing, ubiquitinated. Undergoes polyubiquitination upon activation.

It is found in the cell membrane. The protein localises to the secreted. It localises to the membrane raft. Its activity is regulated as follows. Forms a heterodimer of 2 chains generated by proteolytic processing that remain associated through non-covalent interactions mediated by the GAIN-B domain. In the inactivated receptor, the Stachel sequence (also named stalk) is embedded in the GAIN-B domain, where it adopts a beta-strand conformation. On activation, the Stachel moves into the 7 transmembrane region and adopts a twisted hook-shaped configuration that forms contacts within the receptor, leading to coupling of a G-alpha protein, which activates signaling. The cleaved GAIN-B and N-terminal domains can then dissociate from the rest of the receptor. Adhesion G-protein coupled receptor (aGPCR) for steroid hormone 17alpha-hydroxypregnenolone (17-OH), which is involved in cell adhesion and cell-cell interactions. Ligand binding causes a conformation change that triggers signaling via guanine nucleotide-binding proteins (G proteins) and modulates the activity of downstream effectors, such as RhoA pathway. ADGRG1 is coupled to G(12) and/or G(13) G proteins (GNA12 and GNA13, respectively) and mediates the activation Rho small GTPases. Acts as a potent suppressor of ferroptosis: binding to 17-OH-binding initiates signaling that down-regulates CD36 and alleviates ferroptosis-induced liver injury. Ligand-binding also induces cell adhesion activity via association with proteins such as collagen III/COL3A1 and TGM2. Mediates cell matrix adhesion in developing neurons and hematopoietic stem cells. Involved in cortical development, specifically in maintenance of the pial basement membrane integrity and in cortical lamination: association with COL3A1 in the developing brain inhibits neuronal migration via activation of the RhoA pathway. Together with TGM2, acts as a regulator of myelination and myelin repair in oligodendrocyte precursor cells. Acts as a hemostatic sensor of shear force: G protein-coupled receptor signaling is activated in response to shear force in platelets, promoting G(13) G protein signaling, and platelet shape change and aggregation in a COL3A1-dependent manner. Acts as an inhibitor of VEGFA production thereby inhibiting angiogenesis through a signaling pathway mediated by PRKCA. Plays a role in the maintenance of hematopoietic stem cells in bone marrow niche. Plays an essential role in testis development. The chain is Adhesion G-protein coupled receptor G1 (ADGRG1) from Pan troglodytes (Chimpanzee).